Consider the following 452-residue polypeptide: Adenylosuccinate synthetase isozyme 1 (452 aa).

A disordered region spans residues 1 to 22; that stretch reads MSGTRASNDRSSHPGGHKRPRY. GTP is bound by residues 37 to 43 and 65 to 67; these read GDEGKGK and GHT. The Proton acceptor role is filled by aspartate 38. Aspartate 38 and glycine 65 together coordinate Mg(2+). Aspartate 38 is a binding site for substrate. IMP contacts are provided by residues 38-41, 63-66, threonine 158, arginine 172, asparagine 251, threonine 266, and arginine 330; these read DEGK and NAGH. Residue histidine 66 is the Proton donor of the active site. 326 to 332 contributes to the substrate binding site; that stretch reads VTTGRKR. GTP is bound by residues arginine 332, 358 to 360, and 440 to 443; these read KLD and GVGK.

Belongs to the adenylosuccinate synthetase family. As to quaternary structure, homodimer. Mg(2+) is required as a cofactor.

Its subcellular location is the cytoplasm. It carries out the reaction IMP + L-aspartate + GTP = N(6)-(1,2-dicarboxyethyl)-AMP + GDP + phosphate + 2 H(+). The protein operates within purine metabolism; AMP biosynthesis via de novo pathway; AMP from IMP: step 1/2. In terms of biological role, component of the purine nucleotide cycle (PNC), which interconverts IMP and AMP to regulate the nucleotide levels in various tissues, and which contributes to glycolysis and ammoniagenesis. Catalyzes the first committed step in the biosynthesis of AMP from IMP. The protein is Adenylosuccinate synthetase isozyme 1 (adss1) of Xenopus tropicalis (Western clawed frog).